A 263-amino-acid chain; its full sequence is MRITQDVFQKMRDDGEKIAIVTCYDASFAALLERAGVDILLVGDSLGNVIQGEETTLPVTLDDMIYHTLCVKRGASTAFIMTDMPFGTSQVSPEETFRNAAELMAAGANMVKIEGGSVMAETVEFLTQRGIPVCAHIGLTPQSVNQLGGYKVQGKTDYEAEQLLEDAVALEQAGAGMLLMEVVPAALAAQVTRTLSIPTIGIGAGKDCSAQVLVLYDMLGIYSGKKARFMKNFLTGAGSIEEAVQNYTRAVKTGEFPGPEHTF.

Residues aspartate 44 and aspartate 83 each contribute to the Mg(2+) site. Residues 44–45, aspartate 83, and lysine 112 each bind 3-methyl-2-oxobutanoate; that span reads DS. Mg(2+) is bound at residue glutamate 114. Glutamate 181 (proton acceptor) is an active-site residue.

The protein belongs to the PanB family. As to quaternary structure, homodecamer; pentamer of dimers. Mg(2+) serves as cofactor.

It localises to the cytoplasm. The catalysed reaction is 3-methyl-2-oxobutanoate + (6R)-5,10-methylene-5,6,7,8-tetrahydrofolate + H2O = 2-dehydropantoate + (6S)-5,6,7,8-tetrahydrofolate. It participates in cofactor biosynthesis; (R)-pantothenate biosynthesis; (R)-pantoate from 3-methyl-2-oxobutanoate: step 1/2. Catalyzes the reversible reaction in which hydroxymethyl group from 5,10-methylenetetrahydrofolate is transferred onto alpha-ketoisovalerate to form ketopantoate. The chain is 3-methyl-2-oxobutanoate hydroxymethyltransferase from Nitrosospira multiformis (strain ATCC 25196 / NCIMB 11849 / C 71).